The sequence spans 94 residues: Large ribosomal subunit protein bL28 (94 aa).

Residues methionine 1–serine 21 are disordered. Positions glycine 11–histidine 20 are enriched in polar residues.

This sequence belongs to the bacterial ribosomal protein bL28 family.

The polypeptide is Large ribosomal subunit protein bL28 (Leptospira interrogans serogroup Icterohaemorrhagiae serovar copenhageni (strain Fiocruz L1-130)).